The chain runs to 145 residues: LIM domain only protein 3 (145 aa).

2 LIM zinc-binding domains span residues 11–73 and 75–137; these read KGCA…LFGT and GNCA…GLMK.

This Rattus norvegicus (Rat) protein is LIM domain only protein 3 (Lmo3).